The primary structure comprises 106 residues: Large ribosomal subunit protein uL24 (106 aa).

Over residues glutamate 84–arginine 97 the composition is skewed to basic and acidic residues. A disordered region spans residues glutamate 84–lysine 106.

It belongs to the universal ribosomal protein uL24 family. In terms of assembly, part of the 50S ribosomal subunit.

One of two assembly initiator proteins, it binds directly to the 5'-end of the 23S rRNA, where it nucleates assembly of the 50S subunit. Functionally, one of the proteins that surrounds the polypeptide exit tunnel on the outside of the subunit. The sequence is that of Large ribosomal subunit protein uL24 from Anaeromyxobacter dehalogenans (strain 2CP-C).